Reading from the N-terminus, the 355-residue chain is Chorismate synthase (355 aa).

Arg48 serves as a coordination point for NADP(+). Residues 125-127 (RSS), 239-240 (NA), Gly280, 295-299 (KPVAT), and Arg321 contribute to the FMN site.

Belongs to the chorismate synthase family. In terms of assembly, homotetramer. It depends on FMNH2 as a cofactor.

It catalyses the reaction 5-O-(1-carboxyvinyl)-3-phosphoshikimate = chorismate + phosphate. The protein operates within metabolic intermediate biosynthesis; chorismate biosynthesis; chorismate from D-erythrose 4-phosphate and phosphoenolpyruvate: step 7/7. Catalyzes the anti-1,4-elimination of the C-3 phosphate and the C-6 proR hydrogen from 5-enolpyruvylshikimate-3-phosphate (EPSP) to yield chorismate, which is the branch point compound that serves as the starting substrate for the three terminal pathways of aromatic amino acid biosynthesis. This reaction introduces a second double bond into the aromatic ring system. This Flavobacterium psychrophilum (strain ATCC 49511 / DSM 21280 / CIP 103535 / JIP02/86) protein is Chorismate synthase.